Reading from the N-terminus, the 214-residue chain is MPGYSDNIIRNASGLIPMVIEQTSRGERSYDIYSRLLKERIIFLLGEVEDHMANLVVAQLLFLESENPEKDISLYINSPGGVVTAGLAIYDTMQFIKPDVSTLCIGQAASAAALLLCAGAEGKRFCLPNSRVMIHQPLGGYRGQATDIEIHARETLAVRERLNNIMAKHTKKTPDQIMRDTERDNFMSATQAMEYGLIDKVLYDRQVAGHSTDL.

Catalysis depends on serine 110, which acts as the Nucleophile. Residue histidine 135 is part of the active site.

The protein belongs to the peptidase S14 family. Fourteen ClpP subunits assemble into 2 heptameric rings which stack back to back to give a disk-like structure with a central cavity, resembling the structure of eukaryotic proteasomes.

Its subcellular location is the cytoplasm. The enzyme catalyses Hydrolysis of proteins to small peptides in the presence of ATP and magnesium. alpha-casein is the usual test substrate. In the absence of ATP, only oligopeptides shorter than five residues are hydrolyzed (such as succinyl-Leu-Tyr-|-NHMec, and Leu-Tyr-Leu-|-Tyr-Trp, in which cleavage of the -Tyr-|-Leu- and -Tyr-|-Trp bonds also occurs).. In terms of biological role, cleaves peptides in various proteins in a process that requires ATP hydrolysis. Has a chymotrypsin-like activity. Plays a major role in the degradation of misfolded proteins. The sequence is that of ATP-dependent Clp protease proteolytic subunit from Legionella pneumophila (strain Paris).